The following is a 140-amino-acid chain: CBS domain-containing protein YhcV (140 aa).

CBS domains follow at residues M8–G64 and M72–A127.

The polypeptide is CBS domain-containing protein YhcV (yhcV) (Bacillus subtilis (strain 168)).